The primary structure comprises 295 residues: UDP-N-acetylenolpyruvoylglucosamine reductase (295 aa).

The FAD-binding PCMH-type domain maps to 26 to 189 (VGGRADILFK…VEAEFKGVNS (164 aa)). Residue Arg169 is part of the active site. The active-site Proton donor is Cys218. Glu288 is an active-site residue.

The protein belongs to the MurB family. It depends on FAD as a cofactor.

The protein resides in the cytoplasm. The enzyme catalyses UDP-N-acetyl-alpha-D-muramate + NADP(+) = UDP-N-acetyl-3-O-(1-carboxyvinyl)-alpha-D-glucosamine + NADPH + H(+). It participates in cell wall biogenesis; peptidoglycan biosynthesis. Cell wall formation. The protein is UDP-N-acetylenolpyruvoylglucosamine reductase of Wolbachia sp. subsp. Drosophila simulans (strain wRi).